The following is a 185-amino-acid chain: Ribosome-recycling factor (185 aa).

It belongs to the RRF family.

The protein resides in the cytoplasm. Functionally, responsible for the release of ribosomes from messenger RNA at the termination of protein biosynthesis. May increase the efficiency of translation by recycling ribosomes from one round of translation to another. This is Ribosome-recycling factor from Baumannia cicadellinicola subsp. Homalodisca coagulata.